We begin with the raw amino-acid sequence, 108 residues long: UPF0060 membrane protein RER_49640 (108 aa).

Transmembrane regions (helical) follow at residues 8 to 28 (LLFV…WQGI), 33 to 53 (GWIW…VATM), 62 to 82 (ILAA…VVMD), and 87 to 107 (DRFD…IMYA).

Belongs to the UPF0060 family.

It is found in the cell membrane. This Rhodococcus erythropolis (strain PR4 / NBRC 100887) protein is UPF0060 membrane protein RER_49640.